A 445-amino-acid chain; its full sequence is 3-phosphoshikimate 1-carboxyvinyltransferase (445 aa).

The interval 1–25 is disordered; the sequence is MTDSNQPTPLQARKSGALHGTARVP. 3-phosphoshikimate contacts are provided by Lys-28, Ser-29, and Arg-33. Lys-28 contributes to the phosphoenolpyruvate binding site. Residues Gly-101 and Arg-129 each contribute to the phosphoenolpyruvate site. Ser-175, Gln-177, Asp-328, and Lys-355 together coordinate 3-phosphoshikimate. Gln-177 provides a ligand contact to phosphoenolpyruvate. Asp-328 (proton acceptor) is an active-site residue. Phosphoenolpyruvate is bound by residues Arg-359 and Arg-402.

Belongs to the EPSP synthase family. Monomer.

The protein localises to the cytoplasm. It catalyses the reaction 3-phosphoshikimate + phosphoenolpyruvate = 5-O-(1-carboxyvinyl)-3-phosphoshikimate + phosphate. It participates in metabolic intermediate biosynthesis; chorismate biosynthesis; chorismate from D-erythrose 4-phosphate and phosphoenolpyruvate: step 6/7. In terms of biological role, catalyzes the transfer of the enolpyruvyl moiety of phosphoenolpyruvate (PEP) to the 5-hydroxyl of shikimate-3-phosphate (S3P) to produce enolpyruvyl shikimate-3-phosphate and inorganic phosphate. This chain is 3-phosphoshikimate 1-carboxyvinyltransferase, found in Rhodopseudomonas palustris (strain TIE-1).